A 190-amino-acid polypeptide reads, in one-letter code: UPF0301 protein TC_0483 (190 aa).

The protein belongs to the UPF0301 (AlgH) family.

This chain is UPF0301 protein TC_0483, found in Chlamydia muridarum (strain MoPn / Nigg).